An 897-amino-acid chain; its full sequence is Alanine--tRNA ligase (897 aa).

4 residues coordinate Zn(2+): histidine 581, histidine 585, cysteine 684, and histidine 688.

The protein belongs to the class-II aminoacyl-tRNA synthetase family. Zn(2+) serves as cofactor.

It is found in the cytoplasm. The catalysed reaction is tRNA(Ala) + L-alanine + ATP = L-alanyl-tRNA(Ala) + AMP + diphosphate. Functionally, catalyzes the attachment of alanine to tRNA(Ala) in a two-step reaction: alanine is first activated by ATP to form Ala-AMP and then transferred to the acceptor end of tRNA(Ala). Also edits incorrectly charged Ser-tRNA(Ala) and Gly-tRNA(Ala) via its editing domain. The chain is Alanine--tRNA ligase from Mycobacterium sp. (strain KMS).